The sequence spans 130 residues: uncharacterized protein (130 aa).

This is an uncharacterized protein from Saccharomyces cerevisiae (strain ATCC 204508 / S288c) (Baker's yeast).